Consider the following 346-residue polypeptide: Protein Spea_1705 (346 aa).

The active-site Proton acceptor is the cysteine 101. Substrate-binding positions include 102 to 103 (GH), aspartate 262, and 267 to 268 (GT).

This sequence belongs to the proline racemase family.

It carries out the reaction trans-3-hydroxy-L-proline = 1-pyrroline-2-carboxylate + H2O. In terms of biological role, in vitro, catalyzes the dehydration of trans-3-hydroxy-L-proline (t3LHyp) to Delta(1)-pyrroline-2-carboxylate (Pyr2C), albeit with very low efficiency. The physiological substrate may be different. Displays neither trans-4-hydroxy-L-proline (t4LHyp) epimerase nor proline racemase activity. This is Protein Spea_1705 from Shewanella pealeana (strain ATCC 700345 / ANG-SQ1).